Reading from the N-terminus, the 180-residue chain is HTH-type transcriptional regulator EcpR (180 aa).

One can recognise an HTH luxR-type domain in the interval 122–180 (KDIKKDKITDREMKIIRMTAQGMQPKSIARIENCSVKTVYTHRRNAEAKLYSKIYKLVQ). Residues 146–165 (PKSIARIENCSVKTVYTHRR) constitute a DNA-binding region (H-T-H motif).

The protein belongs to the EcpR/MatA family.

It is found in the cytoplasm. In terms of biological role, part of the ecpRABCDE operon, which encodes the E.coli common pilus (ECP). ECP plays a dual role in early-stage biofilm development and host cell recognition. Positively regulates the expression of the ecp operon. In Klebsiella pneumoniae subsp. pneumoniae (strain ATCC 700721 / MGH 78578), this protein is HTH-type transcriptional regulator EcpR (ecpR).